Here is a 357-residue protein sequence, read N- to C-terminus: F-box only protein 25 (357 aa).

Residues 1–83 (MPFLGQDWRS…DTAAHSFYRE (83 aa)) form an interaction with beta-actin region. In terms of domain architecture, F-box spans 225 to 273 (LTLSDLPLHMLNNILYRFSDGWDIVTLGQVTPTLYMLSEDRRLWKRLCQ).

Part of a SCF (SKP1-cullin-F-box) protein ligase complex consisting of FBXO25, SKP1, CUL1 and RBX1. Interacts directly with SKP1 and CUL1. Interacts (via C-terminus) with beta-actin (via N-terminus). As to expression, expressed in all tissues tested, except striated muscle (at protein level). Expressed predominantly in the cerebral cortex, the hippocampus and the Purkinje cell layer of the brain. Intestine and kidney show also significant levels.

It localises to the nucleus. Its pathway is protein modification; protein ubiquitination. In terms of biological role, substrate-recognition component of the SCF (SKP1-CUL1-F-box protein)-type E3 ubiquitin ligase complex. May play a role in accumulation of expanded polyglutamine (polyQ) protein huntingtin (HTT). This is F-box only protein 25 (Fbxo25) from Mus musculus (Mouse).